The sequence spans 601 residues: Glutamyl-tRNA(Gln) amidotransferase subunit B, mitochondrial (601 aa).

Residues 1-52 constitute a mitochondrion transit peptide; sequence MLQQWLRQSPGAARFLRGSCCRGPQSGSLRHSPLPTAPHRCIRSLQTSATES.

It belongs to the GatB/GatE family. GatB subfamily. As to quaternary structure, subunit of the heterotrimeric GatCAB amidotransferase (AdT) complex, composed of A, B and C subunits.

The protein resides in the mitochondrion. The catalysed reaction is L-glutamyl-tRNA(Gln) + L-glutamine + ATP + H2O = L-glutaminyl-tRNA(Gln) + L-glutamate + ADP + phosphate + H(+). In terms of biological role, allows the formation of correctly charged Gln-tRNA(Gln) through the transamidation of misacylated Glu-tRNA(Gln) in the mitochondria. The reaction takes place in the presence of glutamine and ATP through an activated gamma-phospho-Glu-tRNA(Gln). The sequence is that of Glutamyl-tRNA(Gln) amidotransferase subunit B, mitochondrial from Neosartorya fischeri (strain ATCC 1020 / DSM 3700 / CBS 544.65 / FGSC A1164 / JCM 1740 / NRRL 181 / WB 181) (Aspergillus fischerianus).